A 231-amino-acid chain; its full sequence is Somatolactin (231 aa).

A signal peptide spans 1–24 (MNMMTVKQQGVWAALLWPYLLTAS). Cystine bridges form between C29-C39, C89-C205, and C222-C230. An N-linked (GlcNAc...) asparagine glycan is attached at N145.

The protein belongs to the somatotropin/prolactin family. As to expression, pituitary gland.

Its subcellular location is the secreted. In Paralichthys olivaceus (Bastard halibut), this protein is Somatolactin.